Here is a 441-residue protein sequence, read N- to C-terminus: Apolipoprotein N-acyltransferase (441 aa).

7 helical membrane-spanning segments follow: residues 23–43, 45–65, 75–95, 97–117, 133–153, 156–176, and 178–198; these read IIFK…SIYL, FFEN…GLVL, YFWI…LSSI, FNLN…YGLL, GIFC…WGIF, YGFF…AYFI, and EGYI…FSGF. Positions 215–441 constitute a CN hydrolase domain; sequence INTNISQDQK…LSKEIFNDKK (227 aa). The active-site Proton acceptor is Glu256. Lys310 is an active-site residue. Cys359 serves as the catalytic Nucleophile.

This sequence belongs to the CN hydrolase family. Apolipoprotein N-acyltransferase subfamily.

It localises to the cell inner membrane. The catalysed reaction is N-terminal S-1,2-diacyl-sn-glyceryl-L-cysteinyl-[lipoprotein] + a glycerophospholipid = N-acyl-S-1,2-diacyl-sn-glyceryl-L-cysteinyl-[lipoprotein] + a 2-acyl-sn-glycero-3-phospholipid + H(+). The protein operates within protein modification; lipoprotein biosynthesis (N-acyl transfer). Functionally, catalyzes the phospholipid dependent N-acylation of the N-terminal cysteine of apolipoprotein, the last step in lipoprotein maturation. The protein is Apolipoprotein N-acyltransferase of Campylobacter jejuni subsp. jejuni serotype O:2 (strain ATCC 700819 / NCTC 11168).